The sequence spans 566 residues: FAD-dependent monooxygenase asqG (566 aa).

Residues 1 to 19 (MAAFTVIIIGGSISGLTLA) form the signal peptide. FAD-binding residues include glutamate 33, valine 47, arginine 113, aspartate 313, and alanine 326. 2 consecutive transmembrane segments (helical) span residues 448-468 (ASST…GAVW) and 482-502 (GYTL…ASAV).

The protein belongs to the paxM FAD-dependent monooxygenase family. FAD is required as a cofactor.

The protein localises to the membrane. It catalyses the reaction [(1'E)-3'-hydroxy-3',7'-dimethylocta-1',6'-dien-1'-yl]-quinolinone B + NADPH + O2 + H(+) = [(1'E)-5'-(3',3'-dimethyloxiran-2'-yl)-3'-hydroxy-3'-methylpent-1'-en-1'-yl]-quinolinone B + NADP(+) + H2O. Its pathway is secondary metabolite biosynthesis. It functions in the pathway alkaloid biosynthesis. It participates in mycotoxin biosynthesis. Functionally, FAD-dependent monooxygenase; part of the gene cluster that mediates the biosynthesis of the aspoquinolone mycotoxins. Within the pathway, the FAD-dependent monooxygenase asqG catalyzes the epoxidation of the terminal C7'-C8' olefin to produce the intermediate [(1'E)-5'-(3',3'-dimethyloxiran-2'-yl)-3'-hydroxy-3'-methylpent-1'-en-1'-yl]-quinolinone B. The first step of the pathway is catalyzed by the nonribosomal peptide synthetase asqK that condenses anthranilic acid and O-methyl-L-tyrosine to produce 4'-methoxycyclopeptin. 4'-methoxycyclopeptin is then converted to 4'-methoxydehydrocyclopeptin by the ketoglutarate-dependent dioxygenase asqJ. AsqJ also converts its first product 4'-methoxydehydrocyclopeptin to 4'-methoxycyclopenin. The following conversion of 4'-methoxycyclopenin into 4'-methoxyviridicatin is catalyzed by the cyclopenase asqI. 4'-methoxyviridicatin is the precursor of quinolone natural products, and is further converted to quinolinone B. The prenyltransferase asqH1 then catalyzes the canonical Friedel-Crafts alkylation of quinolinone B with dimethylallyl cation to yield dimethylallyl quinolone, which is subjected to FAD-dependent dehydrogenation by the FAD-linked oxidoreductase asqF to yield conjugated aryl diene. The delta(3') double bond then serves as the site of the second alkylation with DMAPP catalyzed by the prenyltransferase asqH2 to yield a carbenium ion intermediate, which can be attacked by H(2)O to yield a styrenyl quinolone containing a C3'-hydroxyprenyl chain. The FAD-dependent monooxygenase asqG performs epoxidation of the terminal C7'-C8' olefin. Finally, after dehydratation of the epoxide at C3 by asqC, the quinolone epoxide rearrangement protein asqO catalyzes an enzymatic 3-exo-tet cyclization to yield the cyclopropyl-THF ring system in aspoquinolone. This chain is FAD-dependent monooxygenase asqG, found in Emericella nidulans (strain FGSC A4 / ATCC 38163 / CBS 112.46 / NRRL 194 / M139) (Aspergillus nidulans).